A 456-amino-acid chain; its full sequence is Chitin synthase regulatory factor 1 (456 aa).

3 disordered regions span residues 1 to 20 (MPAS…ALLV), 38 to 74 (ESPL…SLSS), and 139 to 158 (SKPS…SGSE). Low complexity predominate over residues 140-158 (KPSLSSNSSDSSFSKSGSE). Residues S227 and S230 each carry the phosphoserine modification. Sel1-like repeat units follow at residues 293-327 (NFVP…SLGH), 328-364 (DRSS…DKGN), 365-402 (ADAM…MLGH), and 403-438 (APAC…INDS).

Involved in chitin biosynthesis. This chain is Chitin synthase regulatory factor 1 (chr1), found in Schizosaccharomyces pombe (strain 972 / ATCC 24843) (Fission yeast).